Here is a 95-residue protein sequence, read N- to C-terminus: Aspartyl/glutamyl-tRNA(Asn/Gln) amidotransferase subunit C (95 aa).

It belongs to the GatC family. In terms of assembly, heterotrimer of A, B and C subunits.

The catalysed reaction is L-glutamyl-tRNA(Gln) + L-glutamine + ATP + H2O = L-glutaminyl-tRNA(Gln) + L-glutamate + ADP + phosphate + H(+). It carries out the reaction L-aspartyl-tRNA(Asn) + L-glutamine + ATP + H2O = L-asparaginyl-tRNA(Asn) + L-glutamate + ADP + phosphate + 2 H(+). Its function is as follows. Allows the formation of correctly charged Asn-tRNA(Asn) or Gln-tRNA(Gln) through the transamidation of misacylated Asp-tRNA(Asn) or Glu-tRNA(Gln) in organisms which lack either or both of asparaginyl-tRNA or glutaminyl-tRNA synthetases. The reaction takes place in the presence of glutamine and ATP through an activated phospho-Asp-tRNA(Asn) or phospho-Glu-tRNA(Gln). In Rhodopseudomonas palustris (strain BisB18), this protein is Aspartyl/glutamyl-tRNA(Asn/Gln) amidotransferase subunit C.